The following is a 318-amino-acid chain: WRKY transcription factor 28 (318 aa).

Composition is skewed to polar residues over residues 74–84 and 106–115; these read SSEVFNSSIDQ and RVSPSNSSSS. A disordered region spans residues 74-158; that stretch reads SSEVFNSSID…KTEVKKQREP (85 aa). 2 stretches are compositionally biased toward basic and acidic residues: residues 116 to 126 and 148 to 158; these read EADHPGEDSGK and KKTEVKKQREP. Positions 166–231 form a DNA-binding region, WRKY; that stretch reads SEVDHLEDGY…YEGQHNHPIP (66 aa).

Belongs to the WRKY group II-c family.

It is found in the nucleus. Functionally, transcription factor. Interacts specifically with the W box (5'-(T)TGAC[CT]-3'), a frequently occurring elicitor-responsive cis-acting element. This is WRKY transcription factor 28 (WRKY28) from Arabidopsis thaliana (Mouse-ear cress).